We begin with the raw amino-acid sequence, 832 residues long: Mucosa-associated lymphoid tissue lymphoma translocation protein 1 homolog (832 aa).

The segment at 1–39 (MSLWGQPLQASPPLAVRQPPTASSGPSTSPPAGATLNRL) is disordered. S2 bears the N-acetylserine mark. Over residues 19-39 (PPTASSGPSTSPPAGATLNRL) the composition is skewed to low complexity. A Death domain is found at 45-132 (RRLSESLDRA…EVLPLLNPPG (88 aa)). 2 Ig-like C2-type domains span residues 131-207 (PGLK…FEFS) and 218-314 (AEVT…KKAE). The residue at position 141 (S141) is a Phosphoserine. Disulfide bonds link C154/C196 and C257/C299. Positions 356–570 (IGNMSYWEHP…SLSEKRALTD (215 aa)) are caspase-like. The short motif at 377–384 (LTNLLRQL) is the Nuclear export signal element. Residues H423 and C472 contribute to the active site.

This sequence belongs to the peptidase C14B family. Homooligomer; forms oligomers which bind to TRAF6. Forms a complex with CARD14 and MALT1; resulting in the formation of a CBM (CARD14-BCL10-MALT1) complex. Forms a complex with CARD11 and MALT1; resulting in the formation of a CBM (CARD11-BCL10-MALT1) complex. Forms a complex with CARD9 and MALT1; resulting in the formation of a CBM (CARD9-BCL10-MALT1) complex.

It localises to the cytoplasm. It is found in the perinuclear region. The protein localises to the nucleus. Its function is as follows. Protease that enhances BCL10-induced activation: acts via formation of CBM complexes that channel adaptive and innate immune signaling downstream of CARD domain-containing proteins (CARD9, CARD11 and CARD14) to activate NF-kappa-B and MAP kinase p38 pathways which stimulate expression of genes encoding pro-inflammatory cytokines and chemokines. Mediates BCL10 cleavage: MALT1-dependent BCL10 cleavage plays an important role in T-cell antigen receptor-induced integrin adhesion. Involved in the induction of T helper 17 cells (Th17) differentiation. Cleaves RC3H1 and ZC3H12A in response to T-cell receptor (TCR) stimulation which releases their cooperatively repressed targets to promote Th17 cell differentiation. Also mediates cleavage of N4BP1 in T-cells following TCR-mediated activation, leading to N4BP1 inactivation. May also have ubiquitin ligase activity: binds to TRAF6, inducing TRAF6 oligomerization and activation of its ligase activity. This is Mucosa-associated lymphoid tissue lymphoma translocation protein 1 homolog from Mus musculus (Mouse).